Consider the following 212-residue polypeptide: Glycerol-3-phosphate acyltransferase (212 aa).

Transmembrane regions (helical) follow at residues 8-28, 59-79, 90-110, 122-142, 148-168, and 169-189; these read IFLS…PFAV, AAAA…LWLA, VFAL…FLGF, ILLA…VIIA, SSLA…FGSG, and VAWY…LLLF.

Belongs to the PlsY family. As to quaternary structure, probably interacts with PlsX.

It localises to the cell inner membrane. The catalysed reaction is an acyl phosphate + sn-glycerol 3-phosphate = a 1-acyl-sn-glycero-3-phosphate + phosphate. It functions in the pathway lipid metabolism; phospholipid metabolism. Its function is as follows. Catalyzes the transfer of an acyl group from acyl-phosphate (acyl-PO(4)) to glycerol-3-phosphate (G3P) to form lysophosphatidic acid (LPA). This enzyme utilizes acyl-phosphate as fatty acyl donor, but not acyl-CoA or acyl-ACP. This chain is Glycerol-3-phosphate acyltransferase, found in Bordetella petrii (strain ATCC BAA-461 / DSM 12804 / CCUG 43448).